The primary structure comprises 139 residues: Large-conductance mechanosensitive channel (139 aa).

The next 2 membrane-spanning stretches (helical) occupy residues 9-29 (AFAVKGNVVDMAVGIIIGAAF) and 79-99 (IQTVIDFVIVAFAIFMGVKAI).

It belongs to the MscL family. As to quaternary structure, homopentamer.

The protein resides in the cell inner membrane. Channel that opens in response to stretch forces in the membrane lipid bilayer. May participate in the regulation of osmotic pressure changes within the cell. The chain is Large-conductance mechanosensitive channel from Pseudomonas putida (strain W619).